A 181-amino-acid chain; its full sequence is Putative manganese efflux pump MntP (181 aa).

A run of 5 helical transmembrane segments spans residues 35–55 (IIFGVIEGLTPLVGWALGSIA), 59–79 (VADWDHWIAFTLLLILGLLMI), 102–122 (AATGFATSIDAMAVGVSLAFI), 126–146 (ILITAAAIGLATFLMVTLGVM), and 161–181 (ILGGLALMGVGTVILYEHLTM).

The protein belongs to the MntP (TC 9.B.29) family.

Its subcellular location is the cell inner membrane. In terms of biological role, probably functions as a manganese efflux pump. The sequence is that of Putative manganese efflux pump MntP from Nitrosomonas eutropha (strain DSM 101675 / C91 / Nm57).